A 245-amino-acid polypeptide reads, in one-letter code: 1-(5-phosphoribosyl)-5-[(5-phosphoribosylamino)methylideneamino] imidazole-4-carboxamide isomerase (245 aa).

The Proton acceptor role is filled by Asp8. Asp131 acts as the Proton donor in catalysis.

It belongs to the HisA/HisF family.

The protein localises to the cytoplasm. It catalyses the reaction 1-(5-phospho-beta-D-ribosyl)-5-[(5-phospho-beta-D-ribosylamino)methylideneamino]imidazole-4-carboxamide = 5-[(5-phospho-1-deoxy-D-ribulos-1-ylimino)methylamino]-1-(5-phospho-beta-D-ribosyl)imidazole-4-carboxamide. It participates in amino-acid biosynthesis; L-histidine biosynthesis; L-histidine from 5-phospho-alpha-D-ribose 1-diphosphate: step 4/9. The sequence is that of 1-(5-phosphoribosyl)-5-[(5-phosphoribosylamino)methylideneamino] imidazole-4-carboxamide isomerase from Neisseria gonorrhoeae (strain NCCP11945).